Consider the following 215-residue polypeptide: ATP-dependent Clp protease proteolytic subunit (215 aa).

S116 (nucleophile) is an active-site residue. H141 is a catalytic residue.

The protein belongs to the peptidase S14 family. As to quaternary structure, fourteen ClpP subunits assemble into 2 heptameric rings which stack back to back to give a disk-like structure with a central cavity, resembling the structure of eukaryotic proteasomes.

The protein resides in the cytoplasm. The catalysed reaction is Hydrolysis of proteins to small peptides in the presence of ATP and magnesium. alpha-casein is the usual test substrate. In the absence of ATP, only oligopeptides shorter than five residues are hydrolyzed (such as succinyl-Leu-Tyr-|-NHMec, and Leu-Tyr-Leu-|-Tyr-Trp, in which cleavage of the -Tyr-|-Leu- and -Tyr-|-Trp bonds also occurs).. Functionally, cleaves peptides in various proteins in a process that requires ATP hydrolysis. Has a chymotrypsin-like activity. Plays a major role in the degradation of misfolded proteins. This chain is ATP-dependent Clp protease proteolytic subunit, found in Psychrobacter cryohalolentis (strain ATCC BAA-1226 / DSM 17306 / VKM B-2378 / K5).